We begin with the raw amino-acid sequence, 186 residues long: Adrenodoxin, mitochondrial (186 aa).

Residues methionine 1–glutamine 58 constitute a mitochondrion transit peptide. The residue at position 61 (serine 61) is a Phosphoserine. Lysine 64 carries the N6-acetyllysine; alternate modification. Lysine 64 is subject to N6-succinyllysine; alternate. The 2Fe-2S ferredoxin-type domain maps to isoleucine 65–valine 169. Cysteine 104, cysteine 110, cysteine 113, and cysteine 150 together coordinate [2Fe-2S] cluster. At lysine 156 the chain carries N6-succinyllysine. Phosphoserine is present on serine 175.

It belongs to the adrenodoxin/putidaredoxin family. Interacts with CYP11A1. [2Fe-2S] cluster serves as cofactor. In terms of tissue distribution, detected in adrenal cortex and corpus luteum (at protein level).

It localises to the mitochondrion matrix. Essential for the synthesis of various steroid hormones. Participates in the reduction of mitochondrial cytochrome P450 for steroidogenesis. Transfers electrons from adrenodoxin reductase to CYP11A1, a cytochrome P450 that catalyzes cholesterol side-chain cleavage to produce pregnenolone, the precursor of most steroid hormones. Does not form a ternary complex with adrenodoxin reductase and CYP11A1 but shuttles between the two enzymes to transfer electrons. This Bos taurus (Bovine) protein is Adrenodoxin, mitochondrial (FDX1).